We begin with the raw amino-acid sequence, 271 residues long: 3-methyl-2-oxobutanoate hydroxymethyltransferase (271 aa).

Residues Asp51 and Asp90 each contribute to the Mg(2+) site. Residues 51–52 (DS), Asp90, and Lys119 contribute to the 3-methyl-2-oxobutanoate site. Residue Glu121 participates in Mg(2+) binding. Glu188 acts as the Proton acceptor in catalysis.

This sequence belongs to the PanB family. As to quaternary structure, homodecamer; pentamer of dimers. Mg(2+) is required as a cofactor.

It localises to the cytoplasm. The catalysed reaction is 3-methyl-2-oxobutanoate + (6R)-5,10-methylene-5,6,7,8-tetrahydrofolate + H2O = 2-dehydropantoate + (6S)-5,6,7,8-tetrahydrofolate. Its pathway is cofactor biosynthesis; (R)-pantothenate biosynthesis; (R)-pantoate from 3-methyl-2-oxobutanoate: step 1/2. Its function is as follows. Catalyzes the reversible reaction in which hydroxymethyl group from 5,10-methylenetetrahydrofolate is transferred onto alpha-ketoisovalerate to form ketopantoate. This chain is 3-methyl-2-oxobutanoate hydroxymethyltransferase, found in Aromatoleum aromaticum (strain DSM 19018 / LMG 30748 / EbN1) (Azoarcus sp. (strain EbN1)).